The chain runs to 471 residues: Probable ribonuclease FAU-1 (471 aa).

The protein belongs to the FAU-1 family.

Its function is as follows. Probable RNase involved in rRNA stability through maturation and/or degradation of precursor rRNAs. Binds to RNA in loop regions with AU-rich sequences. The polypeptide is Probable ribonuclease FAU-1 (Caldivirga maquilingensis (strain ATCC 700844 / DSM 13496 / JCM 10307 / IC-167)).